The primary structure comprises 150 residues: Large ribosomal subunit protein bL9 (150 aa).

The protein belongs to the bacterial ribosomal protein bL9 family.

Binds to the 23S rRNA. This chain is Large ribosomal subunit protein bL9, found in Polaromonas sp. (strain JS666 / ATCC BAA-500).